A 221-amino-acid polypeptide reads, in one-letter code: MRLRKKNWTDDFLNQHSFYLINYNNKKIDLKQIFLNNNPTCLEIGSGKGQFITTLALKNLNTNYIGMEKSSTITGVALKKSLKEFENQLKDMTNLKYFNNFAEDLSQMFSSDSFNKIYLNFSDPWPKTRHYKKRLTYVKFLDIYSDILIKNGYLEFKTDNDSLYNFTIEQLNLTNKWEIVINATDLYNNTEFLKDNIPTEYETKFHLANKNIYKIVIKNLK.

3 residues coordinate S-adenosyl-L-methionine: glutamate 43, glutamate 68, and aspartate 123. The active site involves aspartate 123. Substrate contacts are provided by residues lysine 127, aspartate 159, and 199-202 (TEYE).

Belongs to the class I-like SAM-binding methyltransferase superfamily. TrmB family.

The enzyme catalyses guanosine(46) in tRNA + S-adenosyl-L-methionine = N(7)-methylguanosine(46) in tRNA + S-adenosyl-L-homocysteine. Its pathway is tRNA modification; N(7)-methylguanine-tRNA biosynthesis. Catalyzes the formation of N(7)-methylguanine at position 46 (m7G46) in tRNA. The protein is tRNA (guanine-N(7)-)-methyltransferase of Mycoplasma mycoides subsp. mycoides SC (strain CCUG 32753 / NCTC 10114 / PG1).